Reading from the N-terminus, the 769-residue chain is Serine protease HtrA-like (769 aa).

Over residues 1–20 (MDIGKKHVIPKSQYRRKRRE) the composition is skewed to basic residues. The interval 1–388 (MDIGKKHVIP…KKATSKLNKG (388 aa)) is disordered. Composition is skewed to basic and acidic residues over residues 21 to 64 (FFHN…ERFK), 71 to 87 (LEQRNRDVNENKAEESK), and 96 to 108 (YNKDHYLTDDVSK). Over residues 126–139 (YEQNTEATLSTNST) the composition is skewed to polar residues. Residues 140-186 (DKVESTDMRKLSSDKNKVGHEEQHVLSKPSEHDKETRIDFESSRTDS) show a composition bias toward basic and acidic residues. Residues 247–262 (QQSQNEQTKTYTYGDS) are compositionally biased toward polar residues. Composition is skewed to basic and acidic residues over residues 264–296 (QNDKSNHENDLSHHTPSISDDKDYVMREDHIVD) and 310–330 (KIDDDRKLDEKIHVEDKHKQN). Residues 331 to 347 (ADSSETVGYQSQSSASH) show a composition bias toward polar residues. Basic and acidic residues predominate over residues 348–364 (RSTEKRNMAINDHDKLN). Over residues 366-388 (QKPNTKTSANNNQKKATSKLNKG) the composition is skewed to polar residues. Residues 410-430 (LVILMGIIILIVILNAIFNNV) form a helical membrane-spanning segment. Residues histidine 504, aspartate 534, and serine 619 each act as charge relay system in the active site. One can recognise a PDZ domain in the interval 680–733 (IASLNSFERQAVKLLGKVKNGVVVDQVDNNGLADQSGLKKGDVITELDGKLLED).

Belongs to the peptidase S1C family.

The protein localises to the cell membrane. This chain is Serine protease HtrA-like, found in Staphylococcus aureus (strain MRSA252).